Reading from the N-terminus, the 240-residue chain is ATP synthase subunit a (240 aa).

Helical transmembrane passes span 21-41 (LSNL…CVWG), 78-98 (IFLP…LIGV), 116-136 (DAVM…YYGI), 183-203 (ILLS…FGAA), and 212-232 (FSVF…MVYM).

This sequence belongs to the ATPase A chain family. As to quaternary structure, F-type ATPases have 2 components, CF(1) - the catalytic core - and CF(0) - the membrane proton channel. CF(1) has five subunits: alpha(3), beta(3), gamma(1), delta(1), epsilon(1). CF(0) has three main subunits: a(1), b(2) and c(9-12). The alpha and beta chains form an alternating ring which encloses part of the gamma chain. CF(1) is attached to CF(0) by a central stalk formed by the gamma and epsilon chains, while a peripheral stalk is formed by the delta and b chains.

It localises to the cell membrane. Its function is as follows. Key component of the proton channel; it plays a direct role in the translocation of protons across the membrane. This chain is ATP synthase subunit a, found in Oceanobacillus iheyensis (strain DSM 14371 / CIP 107618 / JCM 11309 / KCTC 3954 / HTE831).